The chain runs to 363 residues: 3-dehydroquinate synthase (363 aa).

Residues 72–77 (SGEKEK), 130–131 (TT), Lys142, and Lys151 contribute to the NAD(+) site. Residues Glu184, His247, and His264 each contribute to the Zn(2+) site.

It belongs to the sugar phosphate cyclases superfamily. Dehydroquinate synthase family. Co(2+) serves as cofactor. The cofactor is Zn(2+). It depends on NAD(+) as a cofactor.

The protein localises to the cytoplasm. The catalysed reaction is 7-phospho-2-dehydro-3-deoxy-D-arabino-heptonate = 3-dehydroquinate + phosphate. Its pathway is metabolic intermediate biosynthesis; chorismate biosynthesis; chorismate from D-erythrose 4-phosphate and phosphoenolpyruvate: step 2/7. Catalyzes the conversion of 3-deoxy-D-arabino-heptulosonate 7-phosphate (DAHP) to dehydroquinate (DHQ). In Bacillus anthracis (strain A0248), this protein is 3-dehydroquinate synthase.